Consider the following 337-residue polypeptide: Anthranilate phosphoribosyltransferase (337 aa).

5-phospho-alpha-D-ribose 1-diphosphate is bound by residues glycine 81, 84–85 (GD), serine 89, 91–94 (NVST), 109–117 (KHGNRAMSS), and alanine 121. Glycine 81 is a binding site for anthranilate. Serine 93 is a Mg(2+) binding site. Residue asparagine 112 participates in anthranilate binding. Arginine 167 is a binding site for anthranilate. Residues aspartate 226 and glutamate 227 each contribute to the Mg(2+) site.

This sequence belongs to the anthranilate phosphoribosyltransferase family. In terms of assembly, homodimer. It depends on Mg(2+) as a cofactor.

The catalysed reaction is N-(5-phospho-beta-D-ribosyl)anthranilate + diphosphate = 5-phospho-alpha-D-ribose 1-diphosphate + anthranilate. It functions in the pathway amino-acid biosynthesis; L-tryptophan biosynthesis; L-tryptophan from chorismate: step 2/5. Catalyzes the transfer of the phosphoribosyl group of 5-phosphorylribose-1-pyrophosphate (PRPP) to anthranilate to yield N-(5'-phosphoribosyl)-anthranilate (PRA). This is Anthranilate phosphoribosyltransferase from Afipia carboxidovorans (strain ATCC 49405 / DSM 1227 / KCTC 32145 / OM5) (Oligotropha carboxidovorans).